A 315-amino-acid chain; its full sequence is Serine/threonine-protein phosphatase PP2A catalytic subunit 3 (315 aa).

Residues aspartate 62, histidine 64, aspartate 90, and asparagine 122 each contribute to the Mn(2+) site. Residue histidine 123 is the Proton donor of the active site. 2 residues coordinate Mn(2+): histidine 172 and histidine 247. The interval glutamine 294–leucine 315 is disordered. Basic and acidic residues predominate over residues alanine 298–leucine 315. Leucine 315 bears the Leucine methyl ester mark.

It belongs to the PPP phosphatase family. PP-2A subfamily. It depends on Mn(2+) as a cofactor. In terms of processing, reversibly methyl esterified on Leu-315 by leucine carboxyl methyltransferase 1 (PPM1) and protein phosphatase methylesterase 1 (PPE1). Carboxyl methylation influences the affinity of the catalytic subunit for the different regulatory subunits, thereby modulating the PP2A holoenzyme's substrate specificity, enzyme activity and cellular localization.

It carries out the reaction O-phospho-L-seryl-[protein] + H2O = L-seryl-[protein] + phosphate. The catalysed reaction is O-phospho-L-threonyl-[protein] + H2O = L-threonyl-[protein] + phosphate. This chain is Serine/threonine-protein phosphatase PP2A catalytic subunit 3 (Ppn3), found in Paramecium tetraurelia.